A 323-amino-acid polypeptide reads, in one-letter code: uncharacterized protein (323 aa).

The tract at residues 1–21 (MGSYYSTESTKSNESNETTNN) is disordered. Residue Gly2 is the site of N-myristoyl glycine; by host attachment.

This is an uncharacterized protein from Acanthamoeba polyphaga (Amoeba).